The primary structure comprises 3371 residues: Protocadherin-23 (3371 aa).

The tract at residues 1-40 (MSPCGRKMGEGRQQRRAPVGKLLLLPGRRDTPHGRSGSSG) is disordered. Over 1–46 (MSPCGRKMGEGRQQRRAPVGKLLLLPGRRDTPHGRSGSSGARTQRS) the chain is Cytoplasmic. Residues 47–67 (LLWLLVHVWLWAASGSSAQLF) traverse the membrane as a helical segment. Cadherin domains are found at residues 65–167 (QLFN…SPRF), 168–296 (PLDS…PPVF), 297–413 (EQDE…RPAI), 424–539 (ARVS…PPLF), 540–663 (SQQH…EPIF), 664–771 (WRQV…HPVF), 772–881 (NPST…RPKY), 877–979 (ERPK…HPAF), 980–1082 (LRTS…SPSW), 1085–1191 (EHLV…SPTF), 1192–1294 (LHDV…RPFF), 1299–1415 (PGKE…IPEN), 1404–1510 (SQNI…SPSF), 1511–1620 (QDEL…NPTF), 1620–1724 (FISF…APVF), 1725–1829 (KQHL…APEF), 1830–1933 (IVSS…SPSF), 1934–2038 (PTLY…DPVL), 2039–2130 (EQNP…VIHM), 2140–2242 (SHHL…SPCF), 2243–2347 (EQSI…APAF), 2347–2447 (FLPS…PPVF), 2448–2549 (SQDF…APEF), 2550–2665 (TVKS…PPNF), 2666–2769 (SSLS…APQF), 2770–2880 (MFSS…EPIF), and 2881–2988 (TQDQ…TPLA). The Extracellular portion of the chain corresponds to 68–2986 (NLTLSVDEGL…NVSFSSEGTP (2919 aa)). N-linked (GlcNAc...) asparagine glycans are attached at residues Asn669, Asn772, Asn814, Asn905, Asn966, Asn1038, Asn1172, and Asn1275. 4 N-linked (GlcNAc...) asparagine glycosylation sites follow: Asn1487, Asn1595, Asn1617, and Asn1664. Asn1898 is a glycosylation site (N-linked (GlcNAc...) asparagine). 3 N-linked (GlcNAc...) asparagine glycosylation sites follow: Asn2054, Asn2070, and Asn2098. Asn2329 carries an N-linked (GlcNAc...) asparagine glycan. N-linked (GlcNAc...) asparagine glycans are attached at residues Asn2479, Asn2497, Asn2555, and Asn2664. N-linked (GlcNAc...) asparagine glycosylation is found at Asn2929 and Asn2977. Residues 2987–3017 (LAVFASSFSISLVVSFLVFLILICILIVMIL) form a helical membrane-spanning segment. Topologically, residues 3018 to 3371 (RHKQKDTINN…ELKAEDEVQI (354 aa)) are cytoplasmic. Positions 3117-3140 (KCSDSALSDHESRVPDSGIPRDSD) are enriched in basic and acidic residues. The interval 3117–3141 (KCSDSALSDHESRVPDSGIPRDSDQ) is disordered.

Cerebral cortex and testis.

The protein resides in the membrane. Calcium-dependent cell-adhesion protein. This chain is Protocadherin-23 (DCHS2), found in Homo sapiens (Human).